A 430-amino-acid chain; its full sequence is Dynactin subunit 2 (430 aa).

2 disordered regions span residues Met1–Ser51 and Ser201–Ser228. A compositionally biased stretch (polar residues) spans Ser32–Val44. Coiled-coil stretches lie at residues Thr241–Thr319 and Asp397–Gln430.

Belongs to the dynactin subunit 2 family. Subunit of dynactin, a multiprotein complex associated with dynein.

It is found in the cytoplasm. It localises to the cytoskeleton. The protein localises to the membrane. Its function is as follows. Modulates cytoplasmic dynein binding to an organelle, and plays a role in prometaphase chromosome alignment and spindle organization during mitosis. This Dictyostelium discoideum (Social amoeba) protein is Dynactin subunit 2 (dynB).